The chain runs to 355 residues: Protein pelota homolog (355 aa).

It belongs to the eukaryotic release factor 1 family. Pelota subfamily. In terms of assembly, monomer. It depends on a divalent metal cation as a cofactor.

The protein resides in the cytoplasm. Its function is as follows. May function in recognizing stalled ribosomes, interact with stem-loop structures in stalled mRNA molecules, and effect endonucleolytic cleavage of the mRNA. May play a role in the release non-functional ribosomes and degradation of damaged mRNAs. Has endoribonuclease activity. This Haloarcula marismortui (strain ATCC 43049 / DSM 3752 / JCM 8966 / VKM B-1809) (Halobacterium marismortui) protein is Protein pelota homolog.